The following is an 867-amino-acid chain: Translation initiation factor IF-2 (867 aa).

Residues 367 to 534 (TRAPVVTIMG…AILLQSEILE (168 aa)) enclose the tr-type G domain. The G1 stretch occupies residues 376–383 (GHVDHGKT). Position 376-383 (376-383 (GHVDHGKT)) interacts with GTP. The interval 401–405 (GITQN) is G2. Residues 422–425 (DTPG) form a G3 region. GTP is bound by residues 422-426 (DTPGH) and 476-479 (NKID). Positions 476–479 (NKID) are G4. A G5 region spans residues 512–514 (SAK).

It belongs to the TRAFAC class translation factor GTPase superfamily. Classic translation factor GTPase family. IF-2 subfamily.

The protein localises to the cytoplasm. In terms of biological role, one of the essential components for the initiation of protein synthesis. Protects formylmethionyl-tRNA from spontaneous hydrolysis and promotes its binding to the 30S ribosomal subunits. Also involved in the hydrolysis of GTP during the formation of the 70S ribosomal complex. This is Translation initiation factor IF-2 from Buchnera aphidicola subsp. Schizaphis graminum (strain Sg).